The primary structure comprises 310 residues: Melanocyte-stimulating hormone receptor (310 aa).

Topologically, residues 1–37 are extracellular; that stretch reads MPMQGAQRKLLGSLNSTPTATSNLGLAANRTGAPCLE. Asn-29 carries N-linked (GlcNAc...) asparagine glycosylation. A helical transmembrane segment spans residues 38–63; that stretch reads LPIPDGLFLSLGLVSLVENVLVVAAI. The Cytoplasmic segment spans residues 64–72; sequence AKNRNLHSS. The helical transmembrane segment at 73–93 threads the bilayer; that stretch reads MYCFICCLALSDLLVSGSNML. At 94–110 the chain is on the extracellular side; sequence EAGVLATRASVVQQLHN. The chain crosses the membrane as a helical span at residues 111-132; that stretch reads TIDVLTCSSMLCSLCFLGAIAV. At 133–155 the chain is on the cytoplasmic side; the sequence is DRYISIFYALRYHSIMTLPRAQR. Residues 156–175 form a helical membrane-spanning segment; sequence AVAAIWVASVLSSTLFITYY. Residues 176–183 are Extracellular-facing; it reads DHAAVLLC. Residues 184–203 form a helical membrane-spanning segment; sequence LVVFFLAMLVLMAVLYVHML. The Cytoplasmic portion of the chain corresponds to 204–232; sequence AWACQHAQGIIRLHKRQPPAHKGFGLRGA. A helical membrane pass occupies residues 233 to 258; that stretch reads ATLTILLGIFFLCWGPFFLRLTLVVF. At 259–271 the chain is on the extracellular side; sequence CPQHLTCNCIFKN. Residues 272–292 traverse the membrane as a helical segment; it reads FKVFLTLIICNTIIDPLIYAF. The Cytoplasmic portion of the chain corresponds to 293-310; that stretch reads RSQELRRTLKEVLGRGRW.

Belongs to the G-protein coupled receptor 1 family. In terms of assembly, interacts with MGRN1, but does not undergo MGRN1-mediated ubiquitination; this interaction competes with GNAS-binding and thus inhibits agonist-induced cAMP production. Interacts with OPN3; the interaction results in a decrease in MC1R-mediated cAMP signaling and ultimately a decrease in melanin production in melanocytes.

It is found in the cell membrane. Receptor for MSH (alpha, beta and gamma) and ACTH. The activity of this receptor is mediated by G proteins which activate adenylate cyclase. Mediates melanogenesis, the production of eumelanin (black/brown) and phaeomelanin (red/yellow), via regulation of cAMP signaling in melanocytes. This chain is Melanocyte-stimulating hormone receptor (MC1R), found in Leontopithecus chrysomelas (Golden-headed lion tamarin).